The following is a 221-amino-acid chain: GTP cyclohydrolase-2 (221 aa).

63–67 (RLHSE) serves as a coordination point for GTP. Residues Cys68, Cys79, and Cys81 each coordinate Zn(2+). GTP is bound by residues Gln84, 107–109 (EGR), and Thr129. The Proton acceptor role is filled by Asp141. Arg143 serves as the catalytic Nucleophile. Ser164 and Lys169 together coordinate GTP.

This sequence belongs to the GTP cyclohydrolase II family. Requires Zn(2+) as cofactor.

The enzyme catalyses GTP + 4 H2O = 2,5-diamino-6-hydroxy-4-(5-phosphoribosylamino)-pyrimidine + formate + 2 phosphate + 3 H(+). The protein operates within cofactor biosynthesis; riboflavin biosynthesis; 5-amino-6-(D-ribitylamino)uracil from GTP: step 1/4. Its function is as follows. Catalyzes the conversion of GTP to 2,5-diamino-6-ribosylamino-4(3H)-pyrimidinone 5'-phosphate (DARP), formate and pyrophosphate. In Streptomyces coelicolor (strain ATCC BAA-471 / A3(2) / M145), this protein is GTP cyclohydrolase-2.